The chain runs to 165 residues: Cyclic pyranopterin monophosphate synthase (165 aa).

Substrate is bound by residues 76–78 and 113–114; these read MCH and IE. The active site involves aspartate 128.

Belongs to the MoaC family. As to quaternary structure, homohexamer; trimer of dimers.

It carries out the reaction (8S)-3',8-cyclo-7,8-dihydroguanosine 5'-triphosphate = cyclic pyranopterin phosphate + diphosphate. The protein operates within cofactor biosynthesis; molybdopterin biosynthesis. Functionally, catalyzes the conversion of (8S)-3',8-cyclo-7,8-dihydroguanosine 5'-triphosphate to cyclic pyranopterin monophosphate (cPMP). The chain is Cyclic pyranopterin monophosphate synthase from Limosilactobacillus fermentum (strain NBRC 3956 / LMG 18251) (Lactobacillus fermentum).